A 137-amino-acid chain; its full sequence is 6,7-dimethyl-8-ribityllumazine synthase (137 aa).

Residues F11, 43–45, and 67–69 each bind 5-amino-6-(D-ribitylamino)uracil; these read SFD and CVI. A (2S)-2-hydroxy-3-oxobutyl phosphate-binding site is contributed by 72-73; the sequence is DT. H75 acts as the Proton donor in catalysis. L100 serves as a coordination point for 5-amino-6-(D-ribitylamino)uracil. (2S)-2-hydroxy-3-oxobutyl phosphate is bound at residue R115.

It belongs to the DMRL synthase family. In terms of assembly, forms an icosahedral capsid composed of 60 subunits, arranged as a dodecamer of pentamers.

The catalysed reaction is (2S)-2-hydroxy-3-oxobutyl phosphate + 5-amino-6-(D-ribitylamino)uracil = 6,7-dimethyl-8-(1-D-ribityl)lumazine + phosphate + 2 H2O + H(+). It functions in the pathway cofactor biosynthesis; riboflavin biosynthesis; riboflavin from 2-hydroxy-3-oxobutyl phosphate and 5-amino-6-(D-ribitylamino)uracil: step 1/2. Its function is as follows. Catalyzes the formation of 6,7-dimethyl-8-ribityllumazine by condensation of 5-amino-6-(D-ribitylamino)uracil with 3,4-dihydroxy-2-butanone 4-phosphate. This is the penultimate step in the biosynthesis of riboflavin. The polypeptide is 6,7-dimethyl-8-ribityllumazine synthase (Methanococcus maripaludis (strain C6 / ATCC BAA-1332)).